The primary structure comprises 501 residues: Ribose import ATP-binding protein RbsA 1 (501 aa).

ABC transporter domains lie at Leu-5–Lys-241 and Ala-252–Leu-495. Residue Gly-37–Ser-44 participates in ATP binding.

This sequence belongs to the ABC transporter superfamily. Ribose importer (TC 3.A.1.2.1) family. In terms of assembly, the complex is composed of an ATP-binding protein (RbsA), two transmembrane proteins (RbsC) and a solute-binding protein (RbsB).

Its subcellular location is the cell inner membrane. The enzyme catalyses D-ribose(out) + ATP + H2O = D-ribose(in) + ADP + phosphate + H(+). In terms of biological role, part of the ABC transporter complex RbsABC involved in ribose import. Responsible for energy coupling to the transport system. This chain is Ribose import ATP-binding protein RbsA 1, found in Escherichia coli O157:H7.